The sequence spans 98 residues: Integration host factor subunit alpha (98 aa).

The protein belongs to the bacterial histone-like protein family. In terms of assembly, heterodimer of an alpha and a beta chain.

Its function is as follows. This protein is one of the two subunits of integration host factor, a specific DNA-binding protein that functions in genetic recombination as well as in transcriptional and translational control. The polypeptide is Integration host factor subunit alpha (Mannheimia succiniciproducens (strain KCTC 0769BP / MBEL55E)).